The sequence spans 350 residues: [LysW]-L-2-aminoadipate/[LysW]-L-glutamate phosphate reductase (350 aa).

10 to 13 contacts NADP(+); the sequence is SGYT. The active site involves Cys-150. Asn-317 serves as a coordination point for NADP(+).

Belongs to the NAGSA dehydrogenase family. Type 1 subfamily. LysY sub-subfamily.

It is found in the cytoplasm. The enzyme catalyses [amino-group carrier protein]-C-terminal-N-(1-carboxy-5-oxopentan-1-yl)-L-glutamine + phosphate + NADP(+) = [amino-group carrier protein]-C-terminal-N-(1-carboxy-5-phosphooxy-5-oxopentan-1-yl)-L-glutamine + NADPH + H(+). It carries out the reaction [amino-group carrier protein]-C-terminal-gamma-(L-glutamyl-5-semialdehyde)-L-glutamate + phosphate + NADP(+) = [amino-group carrier protein]-C-terminal-gamma-(5-phospho-L-glutamyl)-L-glutamate + NADPH + H(+). Its pathway is amino-acid biosynthesis; L-lysine biosynthesis via AAA pathway; L-lysine from L-alpha-aminoadipate (Thermus route): step 3/5. It functions in the pathway amino-acid biosynthesis; L-arginine biosynthesis. Involved in both the arginine and lysine biosynthetic pathways. In Sulfolobus acidocaldarius (strain ATCC 33909 / DSM 639 / JCM 8929 / NBRC 15157 / NCIMB 11770), this protein is [LysW]-L-2-aminoadipate/[LysW]-L-glutamate phosphate reductase.